Reading from the N-terminus, the 263-residue chain is Glucosamine-6-phosphate deaminase (263 aa).

Aspartate 72 acts as the Proton acceptor; for enolization step in catalysis. Aspartate 141 acts as the For ring-opening step in catalysis. Histidine 143 (proton acceptor; for ring-opening step) is an active-site residue. Glutamate 148 functions as the For ring-opening step in the catalytic mechanism.

The protein belongs to the glucosamine/galactosamine-6-phosphate isomerase family. NagB subfamily.

It catalyses the reaction alpha-D-glucosamine 6-phosphate + H2O = beta-D-fructose 6-phosphate + NH4(+). The protein operates within amino-sugar metabolism; N-acetylneuraminate degradation; D-fructose 6-phosphate from N-acetylneuraminate: step 5/5. Its activity is regulated as follows. Allosterically activated by N-acetylglucosamine 6-phosphate (GlcNAc6P). Catalyzes the reversible isomerization-deamination of glucosamine 6-phosphate (GlcN6P) to form fructose 6-phosphate (Fru6P) and ammonium ion. This Porphyromonas gingivalis (strain ATCC BAA-308 / W83) protein is Glucosamine-6-phosphate deaminase.